A 208-amino-acid polypeptide reads, in one-letter code: Putative ankyrin repeat protein Ta0196 (208 aa).

ANK repeat units lie at residues 49–78 (YQRN…HIDD), 82–111 (EGNT…SIDI), 115–144 (AGNT…NINI), and 148–177 (EGDT…DLNA).

The chain is Putative ankyrin repeat protein Ta0196 from Thermoplasma acidophilum (strain ATCC 25905 / DSM 1728 / JCM 9062 / NBRC 15155 / AMRC-C165).